The chain runs to 553 residues: Solute carrier family 22 member 12 (553 aa).

A helical transmembrane segment spans residues 9 to 29 (LVGGLGRFQVLQTMALMVSIM). Asn-56 and Asn-102 each carry an N-linked (GlcNAc...) asparagine glycan. A run of 11 helical transmembrane segments spans residues 146 to 166 (PMAQ…CGPA), 174 to 194 (LVLT…AFAP), 195 to 215 (AFPV…GVMM), 232 to 252 (LVMT…AAVA), 260 to 280 (LLQL…WWLA), 351 to 371 (CIST…ALDL), 378 to 398 (IFLL…GALL), 407 to 427 (PTLA…TLVP), 435 to 455 (SALA…ITIY), 466 to 486 (MTAV…GPLV), and 495 to 515 (WLPL…ALLL). Position 542 is a phosphothreonine (Thr-542).

This sequence belongs to the major facilitator (TC 2.A.1) superfamily. Organic cation transporter (TC 2.A.1.19) family. Interacts with PDZK1. Post-translationally, N-glycosylated. As to expression, detected in kidney (at protein level). Detected in fetal and adult kidney. Detected in epithelial cells of proximal tubules in renal cortex.

It is found in the apical cell membrane. It catalyses the reaction urate(out) + (S)-lactate(in) = urate(in) + (S)-lactate(out). The catalysed reaction is nicotinate(in) + urate(out) = nicotinate(out) + urate(in). The enzyme catalyses urate(out) + n chloride(in) = urate(in) + n chloride(out). It carries out the reaction orotate(out) + nicotinate(in) = orotate(in) + nicotinate(out). Functionally, electroneutral antiporter that translocates urate across the apical membrane of proximal tubular cells in exchange for monovalent organic or inorganic anions. Involved in renal reabsorption of urate and helps maintaining blood levels of uric acid. Mediates urate uptake by an exchange with organic anions such as (S)-lactate and nicotinate, and inorganic anion Cl(-). Other inorganic anions such as Br(-), I(-) and NO3(-) may also act as counteranions that exchange for urate. Also mediates orotate tubular uptake coupled with nicotinate efflux and to a lesser extent with lactate efflux, therefore displaying a potential role in orotate renal reabsorption. Orotate transport is Cl(-)-dependent. The polypeptide is Solute carrier family 22 member 12 (Homo sapiens (Human)).